The following is a 394-amino-acid chain: Ceramide synthase 4 (394 aa).

The Lumenal portion of the chain corresponds to 1 to 31; that stretch reads MLSSFNEWFWQDRFWLPPNVTWTELEDRDGR. The N-linked (GlcNAc...) asparagine glycan is linked to Asn19. Residues 32–52 traverse the membrane as a helical segment; that stretch reads VYPHPQDLLAALPLALVLLAM. The homeobox-like stretch occupies residues 67–128; the sequence is WLGVRDQTRR…RRRRNQDRPQ (62 aa). The region spanning 131–332 is the TLC domain; it reads KKFCEASWRF…ILRMLYSFMK (202 aa). 4 helical membrane-spanning segments follow: residues 140–160, 179–199, 209–229, and 260–280; these read FLFYLSSFVGGLSVLYHESWL, LYWWYLLELGFYLSLLIRLPF, QVIHHFVAVILMTFSYSANLL, and VCDALFLIFSFVFFYTRLVLF. A Last loop motif motif is present at residues 291 to 301; sequence ESISNRGPFFG. A helical membrane pass occupies residues 304–324; that stretch reads FFNGLLMLLQLLHVFWSCLIL. Over 325–394 the chain is Cytoplasmic; that stretch reads RMLYSFMKKG…RLTNRHTTAT (70 aa). The interval 341–394 is disordered; that stretch reads RSDVEESDSSEEAAAAQEPLQLKNGAAGGPRPAPTDGPRSRVAGRLTNRHTTAT. A phosphoserine mark is found at Ser342, Ser349, and Ser350.

In terms of processing, phosphorylated at the C-terminus by CK2. Post-translationally, N-glycosylated.

It is found in the endoplasmic reticulum membrane. It carries out the reaction sphinganine + octadecanoyl-CoA = N-(octadecanoyl)-sphinganine + CoA + H(+). The enzyme catalyses eicosanoyl-CoA + sphinganine = N-eicosanoylsphinganine + CoA + H(+). It catalyses the reaction docosanoyl-CoA + sphinganine = N-docosanoylsphinganine + CoA + H(+). The catalysed reaction is tetracosanoyl-CoA + sphinganine = N-tetracosanoylsphinganine + CoA + H(+). It carries out the reaction hexacosanoyl-CoA + sphinganine = N-hexacosanoylsphinganine + CoA + H(+). The enzyme catalyses a fatty acyl-CoA + sphing-4-enine = an N-acylsphing-4-enine + CoA + H(+). It catalyses the reaction sphing-4-enine + octadecanoyl-CoA = N-octadecanoylsphing-4-enine + CoA + H(+). The catalysed reaction is hexadecasphinganine + octadecanoyl-CoA = N-octadecanoylhexadecasphinganine + CoA + H(+). Its pathway is lipid metabolism; sphingolipid metabolism. Ceramide synthase that catalyzes formation of ceramide from sphinganine and acyl-CoA substrates, with high selectivity toward long and very-long chains (C18:0-C22:0) as acyl donor. The sequence is that of Ceramide synthase 4 from Homo sapiens (Human).